Reading from the N-terminus, the 189-residue chain is DnaJ homolog subfamily C member 5G (189 aa).

One can recognise a J domain in the interval 17–98; it reads SLYAVLDLKK…KKRKIYDQHG (82 aa). The disordered stretch occupies residues 154–189; the sequence is PEQDSGRKYQQNVQSQPPRSGAKCDFRSEENSEDDF. Positions 161-171 are enriched in polar residues; the sequence is KYQQNVQSQPP.

Post-translationally, palmitoylated. In terms of tissue distribution, testis specific.

The protein resides in the membrane. The polypeptide is DnaJ homolog subfamily C member 5G (DNAJC5G) (Homo sapiens (Human)).